A 183-amino-acid chain; its full sequence is Probable actin-related protein 2/3 complex subunit 3 (183 aa).

This sequence belongs to the ARPC3 family. As to quaternary structure, component of the Arp2/3 complex.

It localises to the cytoplasm. The protein resides in the cytoskeleton. In terms of biological role, functions as a component of the Arp2/3 complex which is involved in regulation of actin polymerization and together with an activating nucleation-promoting factor (NPF) mediates the formation of branched actin networks. This Caenorhabditis elegans protein is Probable actin-related protein 2/3 complex subunit 3 (arx-5).